A 58-amino-acid chain; its full sequence is Ferredoxin-2 (58 aa).

4Fe-4S ferredoxin-type domains lie at 2–27 (IEVN…MNEE) and 30–58 (KAVV…IVRS). Cys-8 contributes to the [3Fe-4S] cluster binding site. Cys-11 bears the Cysteine methyl disulfide mark. Cys-14 contributes to the [3Fe-4S] cluster binding site. A disulfide bridge connects residues Cys-18 and Cys-42. A [3Fe-4S] cluster-binding site is contributed by Cys-50.

In terms of assembly, homodimer (ferredoxin I) or homotetramer (ferredoxin II). It depends on [3Fe-4S] cluster as a cofactor. The cofactor is [4Fe-4S] cluster.

In terms of biological role, ferredoxins are iron-sulfur proteins that transfer electrons in a wide variety of metabolic reactions. The protein is Ferredoxin-2 of Megalodesulfovibrio gigas (Desulfovibrio gigas).